The chain runs to 372 residues: MTSLNPTSNGKKVIVGMSGGVDSSVSAYLLMQQGFEVEGLFMKNWEEDDTDEYCAAADDLKDAQAVCDKLGIKMHTVNFAAEYWDNVFEYFLAEYKAGRTPNPDIMCNKEIKFKAFLEFADDILDADYIAMGHYVRRRDNSDGSVEMLRGVDGNKDQSYFLYTLSHEQVARSLFPVGELEKHQVREIAQKLGLITHDKKDSTGICFIGERKFTDFLATYLPAQPGDIETSEGEVIGTHQGLMYHTLGQRKGLGIGGLKNSNEDPWYVVEKDLVRNVLIVAQGGNHPRLMSTGMTVNQLHWVDRTGPANNSTITVKTRYRQRDVGCTLTYDDADNITVMFDEPVAAVTPGQSAVFYDGDICLGGGIIDTLIRG.

ATP-binding positions include 16–23 and methionine 42; that span reads GMSGGVDS. An interaction with target base in tRNA region spans residues 102–104; sequence NPD. Cysteine 107 acts as the Nucleophile in catalysis. Cysteine 107 and cysteine 205 are oxidised to a cystine. Position 132 (glycine 132) interacts with ATP. The interval 155-157 is interaction with tRNA; that stretch reads KDQ. Catalysis depends on cysteine 205, which acts as the Cysteine persulfide intermediate. The tract at residues 317–318 is interaction with tRNA; the sequence is RY.

It belongs to the MnmA/TRMU family.

Its subcellular location is the cytoplasm. The catalysed reaction is S-sulfanyl-L-cysteinyl-[protein] + uridine(34) in tRNA + AH2 + ATP = 2-thiouridine(34) in tRNA + L-cysteinyl-[protein] + A + AMP + diphosphate + H(+). Its function is as follows. Catalyzes the 2-thiolation of uridine at the wobble position (U34) of tRNA, leading to the formation of s(2)U34. In Shewanella frigidimarina (strain NCIMB 400), this protein is tRNA-specific 2-thiouridylase MnmA.